A 746-amino-acid chain; its full sequence is MEEEVQQHSHCMNCVSRRCMTRPEPGVSCDLIGCPLVCGAVFHSCKADEHRLLCPFERVACLNRNFGCPFTLARNKVAEHLEMCPASVVCCTMEWNRWPVSYSDRKSYESLSRDVDEVAQLDMALALQDQRMLLESLKVATMMSKATDKISEPREQISVKSSVQEIPRTNGLVSVDEESYGALYQATVETTRSLAAALDILNSATRDIGMLNTSLHATANEMDEENNKESFQDKNLKDQDHLDEGEIGAVGGVDYSGTSQNAQAEQNGSSDLLCDLNPSSNGTSALCNGFPLEKMCIQVKGQDQNFHGDSTESNITNGDCVEADGTSEPSSSLVVPEQLREISPFSALPDSTFQQILMPDEDDEKDLCWKKVDLGDLKDVNGSPFSHAPSFKFLSNSWYIPKEDKAVDTSDLEVAEDPMGLQGIDLITAALLFCLGDSPGGRGISDSRMTDVYHVDFGTQTFSLPSAILATNTMVGEIASASACDHANPQLSNPSPFQTLGLDLVLECVARYQPKQRSMFTFVCGQLFRRKEFSSHFKNVHGDIHAGLNGWMEQRCPLAYYGCTYSQRRFCPSTQGAKIIHDRHLRSFGVQPCVSTVLEEPSRNCVLGLRSDHLSSLPFEVLQHIAGFLDGFSLCQLACVSRLMRDVCGSLLQSRGMVILQWGKKKYPEGNSSWQIKEKVWRFSTAFCSVNDWKFADILSMADHLKNCSYNVIEKREEAIPLPCMCVTRELTKEGRSLRSVLKPVL.

The segment at 49 to 110 (EHRLLCPFER…SYSDRKSYES (62 aa)) adopts a TRAF-type zinc-finger fold. Disordered regions lie at residues 222-241 (MDEE…DQDH) and 247-266 (IGAV…QAEQ). Residues 225–241 (ENNKESFQDKNLKDQDH) show a composition bias toward basic and acidic residues. A compositionally biased stretch (polar residues) spans 256–266 (SGTSQNAQAEQ). Serine 383 carries the post-translational modification Phosphoserine. In terms of domain architecture, F-box spans 611 to 659 (SDHLSSLPFEVLQHIAGFLDGFSLCQLACVSRLMRDVCGSLLQSRGMVI).

As to quaternary structure, part of a SCF (SKP1-cullin-F-box) protein ligase complex. Interacts with SKP1, CUL1 and RBX1/ROC1. Post-translationally, auto-ubiquitinated. In terms of processing, may be neddylated. Neddylation may be required for E3 ligase activity, since it was observed only after purification with o-phenanthroline.

The protein operates within protein modification; protein ubiquitination. In terms of biological role, substrate-recognition component of the SCF (SKP1-CUL1-F-box protein)-type E3 ubiquitin ligase complex. Required for muscle atrophy following denervation. The polypeptide is F-box only protein 30 (Fbxo30) (Mus musculus (Mouse)).